The primary structure comprises 429 residues: Glutamate-1-semialdehyde 2,1-aminomutase 2 (429 aa).

Position 268 is an N6-(pyridoxal phosphate)lysine (Lys-268).

It belongs to the class-III pyridoxal-phosphate-dependent aminotransferase family. HemL subfamily. As to quaternary structure, homodimer. Pyridoxal 5'-phosphate serves as cofactor.

The protein resides in the cytoplasm. The catalysed reaction is (S)-4-amino-5-oxopentanoate = 5-aminolevulinate. It functions in the pathway porphyrin-containing compound metabolism; protoporphyrin-IX biosynthesis; 5-aminolevulinate from L-glutamyl-tRNA(Glu): step 2/2. The protein is Glutamate-1-semialdehyde 2,1-aminomutase 2 of Bacillus velezensis (strain DSM 23117 / BGSC 10A6 / LMG 26770 / FZB42) (Bacillus amyloliquefaciens subsp. plantarum).